The chain runs to 261 residues: tRNA pseudouridine synthase A 2 (261 aa).

The Nucleophile role is filled by D59. Y117 is a substrate binding site.

This sequence belongs to the tRNA pseudouridine synthase TruA family. As to quaternary structure, homodimer.

The catalysed reaction is uridine(38/39/40) in tRNA = pseudouridine(38/39/40) in tRNA. Functionally, formation of pseudouridine at positions 38, 39 and 40 in the anticodon stem and loop of transfer RNAs. This is tRNA pseudouridine synthase A 2 from Desulfotalea psychrophila (strain LSv54 / DSM 12343).